A 508-amino-acid polypeptide reads, in one-letter code: Catalase (508 aa).

The N-terminal stretch at 1–21 is a signal peptide; the sequence is MHMSKSFLLISMGLASISVHA. Active-site residues include histidine 72 and asparagine 145. Heme is bound at residue tyrosine 353. The segment covering 373 to 392 has biased composition (polar residues); it reads PKSPVANHNQDGPSNNSTGL. A disordered region spans residues 373-396; sequence PKSPVANHNQDGPSNNSTGLGNVD.

Belongs to the catalase family. It depends on heme as a cofactor.

The protein localises to the periplasm. The enzyme catalyses 2 H2O2 = O2 + 2 H2O. Functionally, decomposes hydrogen peroxide into water and oxygen; serves to protect cells from the toxic effects of hydrogen peroxide. The protein is Catalase of Vibrio vulnificus (strain YJ016).